The primary structure comprises 460 residues: Cysteine proteinase 7 (460 aa).

An N-terminal signal peptide occupies residues 1 to 17; that stretch reads MKVLSALCVLLVSVATA. Residues 18-111 constitute a propeptide, activation peptide; that stretch reads KQQLSEVEYR…TESDKIFDAS (94 aa). Intrachain disulfides connect cysteine 131/cysteine 176 and cysteine 167/cysteine 210. Cysteine 134 is an active-site residue. Residues asparagine 226 and asparagine 252 are each glycosylated (N-linked (GlcNAc...) asparagine). Residues cysteine 268 and cysteine 445 are joined by a disulfide bond. Histidine 275 is an active-site residue. A disordered region spans residues 285–409; it reads GSGSSGSHGG…GSSSGSNSNG (125 aa). A compositionally biased stretch (low complexity) spans 294 to 359; that stretch reads GSQSQSAGSD…QSGSQSGNSG (66 aa). Positions 367–385 are enriched in gly residues; the sequence is AGSGSGSGSGSGSGSGSGS. Low complexity predominate over residues 386–409; sequence VSGSASGSASGSASGSSSGSNSNG. Asparagine 423 is an active-site residue.

This sequence belongs to the peptidase C1 family. Post-translationally, glycosylated; contains GlcNAc-alpha-1-P-Ser residues. Also N-glycosylated.

The protein resides in the lysosome. The protein is Cysteine proteinase 7 (cprG) of Dictyostelium discoideum (Social amoeba).